Consider the following 90-residue polypeptide: Cuticle protein 9.5 (90 aa).

Its function is as follows. Component of the cuticle of migratory locust which contains more than 100 different structural proteins. The sequence is that of Cuticle protein 9.5 from Locusta migratoria (Migratory locust).